A 402-amino-acid chain; its full sequence is Formate-dependent phosphoribosylglycinamide formyltransferase (402 aa).

N(1)-(5-phospho-beta-D-ribosyl)glycinamide-binding positions include 25–26 and E85; that span reads EL. Residues R118, K159, 164–169, 199–202, and E207 each bind ATP; these read SSGKGQ and EQFV. An ATP-grasp domain is found at 123–318; that stretch reads RLASEELGLP…EFELHAKAVL (196 aa). 2 residues coordinate Mg(2+): E277 and E289. N(1)-(5-phospho-beta-D-ribosyl)glycinamide contacts are provided by residues D296, K365, and 372 to 373; that span reads RR.

Belongs to the PurK/PurT family. Homodimer.

It catalyses the reaction N(1)-(5-phospho-beta-D-ribosyl)glycinamide + formate + ATP = N(2)-formyl-N(1)-(5-phospho-beta-D-ribosyl)glycinamide + ADP + phosphate + H(+). It participates in purine metabolism; IMP biosynthesis via de novo pathway; N(2)-formyl-N(1)-(5-phospho-D-ribosyl)glycinamide from N(1)-(5-phospho-D-ribosyl)glycinamide (formate route): step 1/1. Its function is as follows. Involved in the de novo purine biosynthesis. Catalyzes the transfer of formate to 5-phospho-ribosyl-glycinamide (GAR), producing 5-phospho-ribosyl-N-formylglycinamide (FGAR). Formate is provided by PurU via hydrolysis of 10-formyl-tetrahydrofolate. The polypeptide is Formate-dependent phosphoribosylglycinamide formyltransferase (Corynebacterium efficiens (strain DSM 44549 / YS-314 / AJ 12310 / JCM 11189 / NBRC 100395)).